The chain runs to 345 residues: Probable aldo-keto reductase 4 (345 aa).

The active-site Proton donor is Tyr63. His130 provides a ligand contact to substrate. NADP(+) is bound at residue 209-219; the sequence is SPLGRGFFASG.

This sequence belongs to the aldo/keto reductase family.

The chain is Probable aldo-keto reductase 4 from Arabidopsis thaliana (Mouse-ear cress).